Here is a 319-residue protein sequence, read N- to C-terminus: Beta-ketoacyl-[acyl-carrier-protein] synthase III (319 aa).

Catalysis depends on residues Cys-114 and His-246. Residues 247-251 (QANIR) are ACP-binding. Asn-276 is a catalytic residue.

It belongs to the thiolase-like superfamily. FabH family. Homodimer.

It is found in the cytoplasm. It catalyses the reaction malonyl-[ACP] + acetyl-CoA + H(+) = 3-oxobutanoyl-[ACP] + CO2 + CoA. It participates in lipid metabolism; fatty acid biosynthesis. In terms of biological role, catalyzes the condensation reaction of fatty acid synthesis by the addition to an acyl acceptor of two carbons from malonyl-ACP. Catalyzes the first condensation reaction which initiates fatty acid synthesis and may therefore play a role in governing the total rate of fatty acid production. Possesses both acetoacetyl-ACP synthase and acetyl transacylase activities. Its substrate specificity determines the biosynthesis of branched-chain and/or straight-chain of fatty acids. This Thiobacillus denitrificans (strain ATCC 25259 / T1) protein is Beta-ketoacyl-[acyl-carrier-protein] synthase III.